A 201-amino-acid polypeptide reads, in one-letter code: CASP-like protein 2A1 (201 aa).

The tract at residues 1 to 27 is disordered; sequence MEKRDKGSSPMATMMGSRDENEDVENT. The Cytoplasmic portion of the chain corresponds to 1-30; the sequence is MEKRDKGSSPMATMMGSRDENEDVENTTRT. The chain crosses the membrane as a helical span at residues 31 to 51; it reads AETMLRLVPMALCVSALVVML. Residues 52 to 72 are Extracellular-facing; sequence KNTQTNDYGSLSYSDLGAFRY. A helical membrane pass occupies residues 73–93; that stretch reads LVHVNGICAGYSLLSAVIVAM. Residues 94–101 are Cytoplasmic-facing; the sequence is PRASTMPR. The chain crosses the membrane as a helical span at residues 102–122; sequence AWAFFLLDQVLTYVILAAGTV. At 123-152 the chain is on the extracellular side; that stretch reads STEVLYLASKGDTTITWSEACVSFGGFCHK. Residues 153–173 form a helical membrane-spanning segment; that stretch reads ALISIVITFVVVICYAALSLL. At 174–201 the chain is on the cytoplasmic side; sequence SSYKLFSKYDSPVLTYPGKGIEIATFHG.

This sequence belongs to the Casparian strip membrane proteins (CASP) family. In terms of assembly, homodimer and heterodimers.

The protein localises to the cell membrane. The chain is CASP-like protein 2A1 from Populus trichocarpa (Western balsam poplar).